Here is a 246-residue protein sequence, read N- to C-terminus: Flagellar brake protein YcgR (246 aa).

Residues 128 to 232 (KRAHFRAYVG…QAERQLLQAI (105 aa)) form the PilZ domain.

This sequence belongs to the YcgR family. As to quaternary structure, monomer. Interacts with the flagellar basal bodies.

The protein resides in the bacterial flagellum basal body. Functionally, acts as a flagellar brake, regulating swimming and swarming in a bis-(3'-5') cyclic diguanylic acid (c-di-GMP)-dependent manner. Binds 1 c-di-GMP dimer per subunit. Increasing levels of c-di-GMP lead to decreased motility. This chain is Flagellar brake protein YcgR, found in Thioalkalivibrio sulfidiphilus (strain HL-EbGR7).